The following is a 259-amino-acid chain: Ubiquitin-conjugating enzyme E2 J2 (259 aa).

Residues 1 to 226 (MSSTSSKRAP…AGLQQANRHH (226 aa)) are Cytoplasmic-facing. The UBC core domain occupies 12 to 162 (TATQRLKQDY…DKVFCELFPE (151 aa)). Cysteine 94 functions as the Glycyl thioester intermediate in the catalytic mechanism. A helical; Anchor for type IV membrane protein membrane pass occupies residues 227–247 (GLLGGALANLFVIVGFAAFAY). Residues 248 to 259 (TVKYVLRSIAQE) are Lumenal-facing.

Belongs to the ubiquitin-conjugating enzyme family. Auto-ubiquitinated.

Its subcellular location is the endoplasmic reticulum membrane. It carries out the reaction S-ubiquitinyl-[E1 ubiquitin-activating enzyme]-L-cysteine + [E2 ubiquitin-conjugating enzyme]-L-cysteine = [E1 ubiquitin-activating enzyme]-L-cysteine + S-ubiquitinyl-[E2 ubiquitin-conjugating enzyme]-L-cysteine.. Its pathway is protein modification; protein ubiquitination. Catalyzes the covalent attachment of ubiquitin to other proteins. Seems to function in the selective degradation of misfolded membrane proteins from the endoplasmic reticulum (ERAD). In cooperation with the GATOR2 complex, catalyzes 'Lys-6'-linked ubiquitination of NPRL2. This Homo sapiens (Human) protein is Ubiquitin-conjugating enzyme E2 J2 (UBE2J2).